A 527-amino-acid polypeptide reads, in one-letter code: Arginine--tRNA ligase (527 aa).

Positions 108 to 118 (ANPTGPLHIGH) match the 'HIGH' region motif.

Belongs to the class-I aminoacyl-tRNA synthetase family. In terms of assembly, monomer.

The protein resides in the cytoplasm. The enzyme catalyses tRNA(Arg) + L-arginine + ATP = L-arginyl-tRNA(Arg) + AMP + diphosphate. In Sulfurimonas denitrificans (strain ATCC 33889 / DSM 1251) (Thiomicrospira denitrificans (strain ATCC 33889 / DSM 1251)), this protein is Arginine--tRNA ligase.